Here is a 510-residue protein sequence, read N- to C-terminus: Beta-glucosidase 40 (510 aa).

An N-terminal signal peptide occupies residues Met1 to Cys29. A beta-D-glucoside contacts are provided by residues Gln51, His152, and Asn197–Glu198. Glu198 acts as the Proton donor in catalysis. A disulfide bridge links Cys217 with Cys225. Asn229 and Asn278 each carry an N-linked (GlcNAc...) asparagine glycan. Tyr341 is a binding site for a beta-D-glucoside. Residue Asn349 is glycosylated (N-linked (GlcNAc...) asparagine). Residues Glu414, Trp464, Glu471–Trp472, and Phe480 each bind a beta-D-glucoside. Glu414 acts as the Nucleophile in catalysis. N-linked (GlcNAc...) asparagine glycosylation occurs at Asn507.

The protein belongs to the glycosyl hydrolase 1 family.

The catalysed reaction is Hydrolysis of terminal, non-reducing beta-D-glucosyl residues with release of beta-D-glucose.. The chain is Beta-glucosidase 40 from Arabidopsis thaliana (Mouse-ear cress).